The chain runs to 266 residues: DNA damage-regulated autophagy modulator protein 2 (266 aa).

6 helical membrane passes run L8 to I28, K53 to V73, N92 to F112, F117 to F137, L160 to L180, and I207 to I227.

The protein belongs to the DRAM/TMEM150 family.

The protein resides in the lysosome membrane. The protein localises to the photoreceptor inner segment. It localises to the apical cell membrane. In terms of biological role, plays a role in the initiation of autophagy. In the retina, might be involved in the process of photoreceptor cells renewal and recycling to preserve visual function. Induces apoptotic cell death when coexpressed with DRAM1. This Bos taurus (Bovine) protein is DNA damage-regulated autophagy modulator protein 2 (DRAM2).